A 1267-amino-acid polypeptide reads, in one-letter code: Probable ATP-dependent RNA helicase DHR1 (1267 aa).

3 disordered regions span residues 1-67 (MGTY…EPLT), 168-233 (YEPK…SNIK), and 255-313 (EELK…DQND). Composition is skewed to basic and acidic residues over residues 7 to 25 (RFNE…ELKR) and 32 to 43 (TRQDENDERVEN). The span at 175–192 (EYGEGGSSEDDDGEDDFE) shows a compositional bias: acidic residues. Serine 181 is modified (phosphoserine). Positions 202-217 (TDNEEKKSSGFIDHRP) are enriched in basic and acidic residues. Over residues 264–284 (DEMDFDTTSEDDDEEEDQEEE) the composition is skewed to acidic residues. In terms of domain architecture, Helicase ATP-binding spans 401–580 (MEAIHHNDVV…KTLFPIAPPV (180 aa)). 414–421 (GETGSGKT) contacts ATP. The DEAH box motif lies at 516 to 519 (DEAH). Residues 675 to 858 (DIDFSVQVID…SIVLQMKSMA (184 aa)) form the Helicase C-terminal domain. 2 disordered regions span residues 693–720 (RYEE…EVLT) and 955–976 (PNPD…PGMD). Over residues 695 to 719 (EEDEGNSGNGEDEEDEEEEGFEEVL) the composition is skewed to acidic residues.

This sequence belongs to the DEAD box helicase family. DEAH subfamily. In terms of assembly, interacts with snoRNA U3. Component of the ribosomal small subunit (SSU) processome composed of at least 40 protein subunits and snoRNA U3.

It localises to the nucleus. The protein resides in the nucleolus. It carries out the reaction ATP + H2O = ADP + phosphate + H(+). In terms of biological role, probable ATP-binding RNA helicase. Required for 18S rRNA synthesis. May play a role in restructuring of the pre-rRNA. This chain is Probable ATP-dependent RNA helicase DHR1 (ECM16), found in Saccharomyces cerevisiae (strain ATCC 204508 / S288c) (Baker's yeast).